Reading from the N-terminus, the 200-residue chain is NADH-quinone oxidoreductase subunit C (200 aa).

The protein belongs to the complex I 30 kDa subunit family. NDH-1 is composed of 14 different subunits. Subunits NuoB, C, D, E, F, and G constitute the peripheral sector of the complex.

The protein localises to the cell inner membrane. The enzyme catalyses a quinone + NADH + 5 H(+)(in) = a quinol + NAD(+) + 4 H(+)(out). In terms of biological role, NDH-1 shuttles electrons from NADH, via FMN and iron-sulfur (Fe-S) centers, to quinones in the respiratory chain. The immediate electron acceptor for the enzyme in this species is believed to be ubiquinone. Couples the redox reaction to proton translocation (for every two electrons transferred, four hydrogen ions are translocated across the cytoplasmic membrane), and thus conserves the redox energy in a proton gradient. This Burkholderia ambifaria (strain MC40-6) protein is NADH-quinone oxidoreductase subunit C.